The chain runs to 101 residues: Small ribosomal subunit protein uS14 (101 aa).

Belongs to the universal ribosomal protein uS14 family. Part of the 30S ribosomal subunit. Contacts proteins S3 and S10.

In terms of biological role, binds 16S rRNA, required for the assembly of 30S particles and may also be responsible for determining the conformation of the 16S rRNA at the A site. The chain is Small ribosomal subunit protein uS14 from Ruthia magnifica subsp. Calyptogena magnifica.